We begin with the raw amino-acid sequence, 587 residues long: Nucleoporin ndc-1 (587 aa).

Residues 1–79 (MMGENSSAYT…FHSEIDVRKK (79 aa)) are Cytoplasmic-facing. A disordered region spans residues 32–55 (ASTSATSSPNLRKSPNRGFSSPRA). A helical membrane pass occupies residues 80-100 (LASFVCGAAVALSFIVTVSIL). Over 101 to 121 (KLSIWAPFSSVQDSLTWWLYP) the chain is Perinuclear space. A helical membrane pass occupies residues 122–142 (TSWPVTLFIWLSSVAWTFLII). Over 143 to 161 (HQFCTVTQVPRIPITDTYA) the chain is Cytoplasmic. The chain crosses the membrane as a helical span at residues 162–182 (WAGAALEFVHRLIFVYTAFTV). Residues 183–187 (SESSF) are Perinuclear space-facing. A helical transmembrane segment spans residues 188 to 208 (FEDFAWIAIAFSVAISSALVI). Topologically, residues 209–255 (FRSDFHLNFSNVQVNSFKTLIDFAKSLPYGSLAETSGVDAAIAYTAA) are cytoplasmic. Residues 256–276 (MALTVFGSPLLWGFSAWWLLI) form a helical membrane-spanning segment. Residues 277–281 (NIQFH) lie on the Perinuclear space side of the membrane. The helical transmembrane segment at 282–302 (LVLFGVCFAQQFFAKIFMKIV) threads the bilayer. Over 303–587 (NQIVMKPMKF…TIKLVCAEEI (285 aa)) the chain is Cytoplasmic.

This sequence belongs to the NDC1 family.

It is found in the nucleus. The protein localises to the nuclear pore complex. The protein resides in the nucleus membrane. Functionally, component of the nuclear pore complex (NPC), which plays a key role in de novo assembly and insertion of NPC in the nuclear envelope. This chain is Nucleoporin ndc-1 (npp-22), found in Caenorhabditis briggsae.